A 329-amino-acid chain; its full sequence is Diaminopimelate epimerase (329 aa).

Residues Asn14 and Asn73 each coordinate substrate. Cys82 acts as the Proton donor in catalysis. Substrate contacts are provided by residues 83–84, Asn170, Asn206, and 224–225; these read GN and ER. The Proton acceptor role is filled by Cys233. Residue 234 to 235 coordinates substrate; that stretch reads GT.

This sequence belongs to the diaminopimelate epimerase family. As to quaternary structure, homodimer.

Its subcellular location is the cytoplasm. The catalysed reaction is (2S,6S)-2,6-diaminopimelate = meso-2,6-diaminopimelate. It participates in amino-acid biosynthesis; L-lysine biosynthesis via DAP pathway; DL-2,6-diaminopimelate from LL-2,6-diaminopimelate: step 1/1. In terms of biological role, catalyzes the stereoinversion of LL-2,6-diaminopimelate (L,L-DAP) to meso-diaminopimelate (meso-DAP), a precursor of L-lysine and an essential component of the bacterial peptidoglycan. This is Diaminopimelate epimerase from Listeria innocua serovar 6a (strain ATCC BAA-680 / CLIP 11262).